A 213-amino-acid chain; its full sequence is Putative nascent polypeptide-associated complex subunit alpha-like protein (213 aa).

The interval methionine 1–valine 46 is disordered. A compositionally biased stretch (polar residues) spans glutamine 15–glutamate 28. Over residues serine 29–aspartate 42 the composition is skewed to acidic residues. Residues serine 43 and serine 131 each carry the phosphoserine modification. The region spanning arginine 69–alanine 134 is the NAC-A/B domain. Lysine 141 is modified (N6-acetyllysine; alternate). Residue lysine 141 forms a Glycyl lysine isopeptide (Lys-Gly) (interchain with G-Cter in SUMO2); alternate linkage. A Phosphothreonine modification is found at threonine 160. Phosphoserine occurs at positions 165, 185, and 201. Positions valine 175–leucine 211 constitute a UBA domain. Phosphothreonine is present on threonine 212.

This sequence belongs to the NAC-alpha family.

The polypeptide is Putative nascent polypeptide-associated complex subunit alpha-like protein (Homo sapiens (Human)).